We begin with the raw amino-acid sequence, 174 residues long: Ribulose bisphosphate carboxylase small subunit, chloroplastic (174 aa).

A chloroplast-targeting transit peptide spans 1–45 (MAPTVMASSATSVAPFQGLKSTAGLPVSRRSNASSASVSNGGRIR).

The protein belongs to the RuBisCO small chain family. In terms of assembly, heterohexadecamer of 8 large and 8 small subunits.

It is found in the plastid. The protein resides in the chloroplast. Functionally, ruBisCO catalyzes two reactions: the carboxylation of D-ribulose 1,5-bisphosphate, the primary event in carbon dioxide fixation, as well as the oxidative fragmentation of the pentose substrate. Both reactions occur simultaneously and in competition at the same active site. Although the small subunit is not catalytic it is essential for maximal activity. The sequence is that of Ribulose bisphosphate carboxylase small subunit, chloroplastic from Hordeum vulgare (Barley).